Consider the following 144-residue polypeptide: Large ribosomal subunit protein uL15 (144 aa).

Residues 1 to 14 (MVVRREKKSRKMRG) are compositionally biased toward basic residues. The tract at residues 1-35 (MVVRREKKSRKMRGSRTMGWGIRGQHRDRGSQGGR) is disordered.

It belongs to the universal ribosomal protein uL15 family. In terms of assembly, part of the 50S ribosomal subunit.

In terms of biological role, binds to the 23S rRNA. The sequence is that of Large ribosomal subunit protein uL15 from Saccharolobus solfataricus (strain ATCC 35092 / DSM 1617 / JCM 11322 / P2) (Sulfolobus solfataricus).